Reading from the N-terminus, the 1095-residue chain is Tyrosine-sulfated glycopeptide receptor 1 (1095 aa).

The chain crosses the membrane as a helical span at residues 23 to 43 (PHMVLFVLLYVLSISVFFLTV). Asn62 and Asn73 each carry an N-linked (GlcNAc...) asparagine glycan. LRR repeat units lie at residues 91–115 (ENRV…VLDL), 116–139 (QRLS…FLSA), 141–165 (DQLL…SFGN), 170–195 (IFPI…VFLQ), 197–221 (AFNL…MCTA), 223–246 (PQLT…LSRC), 247–270 (SRLS…IYNL), 271–294 (PELE…ITRL), 295–318 (TKLT…IGKL), 320–342 (KLSS…LANC), 344–366 (KLVK…DFSR), 367–391 (FQSL…VYSC), 393–415 (MMTA…VLEL), 416–439 (ESLS…SILQ), 441–466 (CKKL…DFLR), 470–494 (FPSL…LIKL), 495–517 (QRVE…WLGT), 518–542 (LPDL…LFQL), and 566–589 (NPNN…IYIK). N-linked (GlcNAc...) asparagine glycosylation is present at Asn165. Residues Asn199, Asn204, and Asn207 are each glycosylated (N-linked (GlcNAc...) asparagine). N-linked (GlcNAc...) asparagine glycosylation occurs at Asn258. Residue Asn341 is glycosylated (N-linked (GlcNAc...) asparagine). Asn377 carries N-linked (GlcNAc...) asparagine glycosylation. Asn430 carries an N-linked (GlcNAc...) asparagine glycan. Residues Asn569, Asn592, Asn616, Asn627, Asn640, Asn662, and Asn714 are each glycosylated (N-linked (GlcNAc...) asparagine). LRR repeat units follow at residues 604 to 628 (LKVL…LSNL), 629 to 652 (TNLE…LTGL), and 654 to 677 (FLSY…QFDT). A helical membrane pass occupies residues 721 to 741 (LVLGLFFGVSLILVLLALLVL). A phosphothreonine mark is found at Thr792 and Thr800. Residues 803 to 1074 (FSQANIIGCG…PNIQQVVDWL (272 aa)) enclose the Protein kinase domain. Residues 809–817 (IGCGGFGLV) and Lys831 each bind ATP. Tyr876 and Tyr916 each carry phosphotyrosine. Residue Asp929 is the Proton acceptor of the active site. Tyr971 bears the Phosphotyrosine mark.

The protein belongs to the protein kinase superfamily. Ser/Thr protein kinase family. In terms of assembly, homo- and heterodimers with PSKR1. Interacts (via C-terminus) with AHA1 and AHA2 (via the R-domain). In terms of processing, autophosphorylated. Expressed ubiquitously, including in the shoot apical meristem and in the elongation zone of the root meristem.

It is found in the cell membrane. The enzyme catalyses L-seryl-[protein] + ATP = O-phospho-L-seryl-[protein] + ADP + H(+). It carries out the reaction L-threonyl-[protein] + ATP = O-phospho-L-threonyl-[protein] + ADP + H(+). Functionally, tyrosine-sulfated glycopeptide receptor with a serine/threonine-protein kinase activity. Regulates, in response to tyrosine-sulfated glycopeptide binding, a signaling cascade involved in cellular proliferation and plant growth. Not involved in PSK perception. Involved in plant immunity, with antagonistic effects on bacterial and fungal resistances. Mediates activation of the plasma membrane H(+)-ATPase by PSY1. Phosphorylates AHA2 at Thr-881. This Arabidopsis thaliana (Mouse-ear cress) protein is Tyrosine-sulfated glycopeptide receptor 1.